The following is a 746-amino-acid chain: 4-hydroxy-3-methylbut-2-en-1-yl diphosphate synthase (flavodoxin) (746 aa).

4 residues coordinate [4Fe-4S] cluster: Cys-653, Cys-656, Cys-687, and Glu-694.

This sequence belongs to the IspG family. It depends on [4Fe-4S] cluster as a cofactor.

It catalyses the reaction (2E)-4-hydroxy-3-methylbut-2-enyl diphosphate + oxidized [flavodoxin] + H2O + 2 H(+) = 2-C-methyl-D-erythritol 2,4-cyclic diphosphate + reduced [flavodoxin]. The protein operates within isoprenoid biosynthesis; isopentenyl diphosphate biosynthesis via DXP pathway; isopentenyl diphosphate from 1-deoxy-D-xylulose 5-phosphate: step 5/6. In terms of biological role, converts 2C-methyl-D-erythritol 2,4-cyclodiphosphate (ME-2,4cPP) into 1-hydroxy-2-methyl-2-(E)-butenyl 4-diphosphate. This is 4-hydroxy-3-methylbut-2-en-1-yl diphosphate synthase (flavodoxin) from Chlorobaculum tepidum (strain ATCC 49652 / DSM 12025 / NBRC 103806 / TLS) (Chlorobium tepidum).